The sequence spans 324 residues: Methenyltetrahydromethanopterin cyclohydrolase (324 aa).

The protein belongs to the MCH family.

It is found in the cytoplasm. It catalyses the reaction 5,10-methenyl-5,6,7,8-tetrahydromethanopterin + H2O = N(5)-formyl-5,6,7,8-tetrahydromethanopterin + H(+). Its pathway is one-carbon metabolism; formaldehyde degradation; formate from formaldehyde (H(4)MPT route): step 3/5. In terms of biological role, catalyzes the hydrolysis of methenyl-H(4)MPT(+) to 5-formyl-H(4)MPT. The sequence is that of Methenyltetrahydromethanopterin cyclohydrolase from Methylobacterium nodulans (strain LMG 21967 / CNCM I-2342 / ORS 2060).